Consider the following 706-residue polypeptide: Transferrin-binding protein B (706 aa).

The N-terminal stretch at 1-20 (MKHIPLTTLCVAISAVLLTA) is a signal peptide. A lipid anchor (N-palmitoyl cysteine) is attached at Cys21. Cys21 carries S-diacylglycerol cysteine lipidation. Disordered stretches follow at residues 26-92 (GSNP…KEQV) and 384-412 (GSAI…LEGG). The segment covering 42–51 (GNTGNTGNAG) has biased composition (gly residues). A compositionally biased stretch (basic and acidic residues) spans 389–410 (SDKEKDSETKHPFTSDAKDRLE).

This sequence belongs to the TbpB family.

The protein localises to the cell outer membrane. It is found in the cell surface. Functionally, moraxella acquires iron by extracting it from serum transferrin (TF) in its human host. Acts as a transferrin receptor and is required for transferrin utilization. This Moraxella catarrhalis (Branhamella catarrhalis) protein is Transferrin-binding protein B.